Consider the following 318-residue polypeptide: Aspartate carbamoyltransferase catalytic subunit (318 aa).

Positions 59 and 60 each coordinate carbamoyl phosphate. Lys-87 serves as a coordination point for L-aspartate. Carbamoyl phosphate-binding residues include Arg-109, His-137, and Gln-140. Residues Arg-170 and Arg-224 each contribute to the L-aspartate site. Carbamoyl phosphate-binding residues include Gly-265 and Pro-266.

Belongs to the aspartate/ornithine carbamoyltransferase superfamily. ATCase family. Heterododecamer (2C3:3R2) of six catalytic PyrB chains organized as two trimers (C3), and six regulatory PyrI chains organized as three dimers (R2).

It carries out the reaction carbamoyl phosphate + L-aspartate = N-carbamoyl-L-aspartate + phosphate + H(+). It participates in pyrimidine metabolism; UMP biosynthesis via de novo pathway; (S)-dihydroorotate from bicarbonate: step 2/3. Its function is as follows. Catalyzes the condensation of carbamoyl phosphate and aspartate to form carbamoyl aspartate and inorganic phosphate, the committed step in the de novo pyrimidine nucleotide biosynthesis pathway. This chain is Aspartate carbamoyltransferase catalytic subunit, found in Allorhizobium ampelinum (strain ATCC BAA-846 / DSM 112012 / S4) (Agrobacterium vitis (strain S4)).